Reading from the N-terminus, the 584-residue chain is Acetylcholinesterase (584 aa).

Residue A1 is a signal peptide. A disulfide bridge links C70 with C97. S204 functions as the Acyl-ester intermediate in the catalytic mechanism. The cysteines at positions 258 and 273 are disulfide-linked. N-linked (GlcNAc...) asparagine glycosylation occurs at N266. The active-site Charge relay system is E335. The N-linked (GlcNAc...) asparagine glycan is linked to N351. A disulfide bridge connects residues C410 and C530. The active-site Charge relay system is H448. N465 is a glycosylation site (N-linked (GlcNAc...) asparagine).

The protein belongs to the type-B carboxylesterase/lipase family. As to quaternary structure, homotetramer; composed of disulfide-linked homodimers. Interacts with PRIMA1. The interaction with PRIMA1 is required to anchor it to the basal lamina of cells and organize into tetramers.

The protein resides in the synapse. Its subcellular location is the secreted. The protein localises to the cell membrane. It catalyses the reaction acetylcholine + H2O = choline + acetate + H(+). In terms of biological role, terminates signal transduction at the neuromuscular junction by rapid hydrolysis of the acetylcholine released into the synaptic cleft. This is Acetylcholinesterase (ACHE) from Oryctolagus cuniculus (Rabbit).